We begin with the raw amino-acid sequence, 238 residues long: MRPSRRQPDEMRAISFERGVSKHAEGSCLVRFGDTHVLCTASLEEKVPAWLRNSGKGWVTAEYGMLPRSTGERMRREAASGKQGGRTLEIQRLVGRSLRSVIDLEALGEMQITVDCDVLQADGGTRTAAITGGFVALHDCLSWMQARQMVTVERVLKDHVAAISCGIYDGTPVLDLDYAEDSAAETDANFVMTGKGGIVEIQGTAEGAPFTEEEFHELLRLARKGIFRLVELQKMAVS.

Residues arginine 86 and glycine 124–arginine 126 each bind phosphate.

The protein belongs to the RNase PH family. Homohexameric ring arranged as a trimer of dimers.

It carries out the reaction tRNA(n+1) + phosphate = tRNA(n) + a ribonucleoside 5'-diphosphate. In terms of biological role, phosphorolytic 3'-5' exoribonuclease that plays an important role in tRNA 3'-end maturation. Removes nucleotide residues following the 3'-CCA terminus of tRNAs; can also add nucleotides to the ends of RNA molecules by using nucleoside diphosphates as substrates, but this may not be physiologically important. Probably plays a role in initiation of 16S rRNA degradation (leading to ribosome degradation) during starvation. The protein is Ribonuclease PH of Chelativorans sp. (strain BNC1).